The primary structure comprises 107 residues: MAGVLKNVTDDTFEADVLKSEKPVLVDFWAEWCGPCRQIAPSLEAITEHGGQIEIVKLNIDQNPATAAKYGVMSIPTLNVYQGGEVVKTIVGAKPKAALLRPGPVPR.

The region spanning 2–107 is the Thioredoxin domain; the sequence is AGVLKNVTDD…ALLRPGPVPR (106 aa). Cysteine 33 and cysteine 36 form a disulfide bridge.

The protein belongs to the thioredoxin family.

In terms of biological role, component of the thioredoxin-thioredoxin reductase system. Participates in various redox reactions through the reversible oxidation of its active center dithiol to a disulfide and catalyzes dithiol-disulfide exchange reactions. This Streptomyces clavuligerus protein is Thioredoxin (trxA).